A 121-amino-acid polypeptide reads, in one-letter code: Glycine cleavage system H protein (121 aa).

The 83-residue stretch at 16 to 98 folds into the Lipoyl-binding domain; that stretch reads VATIGITAHA…EAGGWFAKVR (83 aa). Residue lysine 57 is modified to N6-lipoyllysine.

It belongs to the GcvH family. The glycine cleavage system is composed of four proteins: P, T, L and H. The cofactor is (R)-lipoate.

Its function is as follows. The glycine cleavage system catalyzes the degradation of glycine. The H protein shuttles the methylamine group of glycine from the P protein to the T protein. This chain is Glycine cleavage system H protein, found in Phenylobacterium zucineum (strain HLK1).